A 272-amino-acid chain; its full sequence is Indole-3-glycerol phosphate synthase (272 aa).

Belongs to the TrpC family.

The catalysed reaction is 1-(2-carboxyphenylamino)-1-deoxy-D-ribulose 5-phosphate + H(+) = (1S,2R)-1-C-(indol-3-yl)glycerol 3-phosphate + CO2 + H2O. Its pathway is amino-acid biosynthesis; L-tryptophan biosynthesis; L-tryptophan from chorismate: step 4/5. In Mycolicibacterium vanbaalenii (strain DSM 7251 / JCM 13017 / BCRC 16820 / KCTC 9966 / NRRL B-24157 / PYR-1) (Mycobacterium vanbaalenii), this protein is Indole-3-glycerol phosphate synthase.